A 337-amino-acid polypeptide reads, in one-letter code: RAD51-associated protein 1 (337 aa).

Disordered stretches follow at residues 1–69 (MVRP…PPKK) and 88–337 (LSVK…SQVR). 2 positions are modified to phosphoserine: Ser-19 and Ser-23. Polar residues predominate over residues 28–38 (ISSSTPVNKSK). The segment at 32–50 (TPVNKSKTVPKVLKQDKPK) is interaction with DNA. A compositionally biased stretch (basic and acidic residues) spans 44–69 (LKQDKPKPNLKNLQKEEVLPTEPPKK). A phosphoserine mark is found at Ser-103 and Ser-107. The segment covering 105-118 (EKSTDKQGKEKTEN) has biased composition (basic and acidic residues). Residues 138 to 143 (LDKITE) carry the SIM motif motif. Residues 190–205 (SESDPDFDESKESDED) show a composition bias toward acidic residues. Residues 225 to 286 (GEKKERKSKP…PSAESKRPKW (62 aa)) form an interaction with DNA region. A Glycyl lysine isopeptide (Lys-Gly) (interchain with G-Cter in SUMO; alternate) cross-link involves residue Lys-251. Lys-251 is covalently cross-linked (Glycyl lysine isopeptide (Lys-Gly) (interchain with G-Cter in ubiquitin; alternate)). The WVPP motif signature appears at 286 to 289 (WVPP). Residues 290-304 (AASGSRNSSSNALAG) show a composition bias toward low complexity. Residues 295–334 (RNSSSNALAGTPAKSPSQSLRLGLSRLAPVKRLHPSATSS) form an interaction with RAD51 region. Residue Ser-309 is modified to Phosphoserine.

In terms of assembly, monomer; elongated monodisperse monomer. Interacts (via C-terminal region) with RAD51; the interaction is direct. Interacts (via SIM motif) with WDR48/UAF1; WDR48/UAF1 and RAD51AP1 cooperate together to stimulate RAD51-mediated homologous recombination (HR). Interacts (via WVPP motif) with DMC1; the interaction is direct. Interacts with PALB2. Interacts with RAD52. Sumoylation with SUMO2/3 by NSMCE2/MMS21 promotes stabilization, possibly by preventing ubiquitination. As to expression, most abundantly expressed in testis. Also expressed in spleen, thymus and bone marrow. Not detected in heart, kidney or liver.

It localises to the chromosome. Its subcellular location is the nucleus. The protein resides in the telomere. In terms of biological role, structure-specific DNA-binding protein involved in DNA repair by promoting RAD51-mediated homologous recombination. Acts by stimulating D-Loop formation by RAD51: specifically enhances joint molecule formation through its structure-specific DNA interaction and its interaction with RAD51. Binds single-stranded DNA (ssDNA), double-stranded DNA (dsDNA) and secondary DNA structures, such as D-loop structures: has a strong preference for branched-DNA structures that are obligatory intermediates during joint molecule formation. Cooperates with WDR48/UAF1 to stimulate RAD51-mediated homologous recombination: both WDR48/UAF1 and RAD51AP1 have coordinated role in DNA-binding during homologous recombination and DNA repair. WDR48/UAF1 and RAD51AP1 also have a coordinated role in DNA-binding to promote USP1-mediated deubiquitination of FANCD2. Also involved in meiosis by promoting DMC1-mediated homologous meiotic recombination. This Mus musculus (Mouse) protein is RAD51-associated protein 1.